Here is a 135-residue protein sequence, read N- to C-terminus: UPF0102 protein RPC_0320 (135 aa).

This sequence belongs to the UPF0102 family.

This is UPF0102 protein RPC_0320 from Rhodopseudomonas palustris (strain BisB18).